Reading from the N-terminus, the 277-residue chain is MEMO1 family protein TM_0087 (277 aa).

It belongs to the MEMO1 family.

In Thermotoga maritima (strain ATCC 43589 / DSM 3109 / JCM 10099 / NBRC 100826 / MSB8), this protein is MEMO1 family protein TM_0087.